Here is a 310-residue protein sequence, read N- to C-terminus: S-adenosylmethionine-dependent nucleotide dehydratase (310 aa).

Positions 3–221 (PAIPPTINLH…VERHRKVESS (219 aa)) constitute a Radical SAM core domain. [4Fe-4S] cluster contacts are provided by Cys-17, Cys-21, and Cys-24.

It belongs to the radical SAM superfamily. Viperin family. It depends on [4Fe-4S] cluster as a cofactor.

The enzyme catalyses GTP + AH2 + S-adenosyl-L-methionine = 3'-deoxy-3',4'-didehydro-GTP + 5'-deoxyadenosine + L-methionine + A + H2O + H(+). In terms of biological role, expression of pVip15 in E.coli (strain MG1655) confers resistance to phage T7; prevents culture collapse upon infection. Catalyzes the conversion of guanosine triphosphate (GTP) to 3'-deoxy-3',4'-didehydro-GTP (ddhGTP), probably via a SAM-dependent radical mechanism. The modified nucleotide represses transcription from T7 RNA polymerase-directed genes (possibly by acting as chain terminators), strongly suggesting these nucleotides block viral polymerase transcription. The protein is S-adenosylmethionine-dependent nucleotide dehydratase of Coraliomargarita akajimensis (strain DSM 45221 / IAM 15411 / JCM 23193 / KCTC 12865 / 04OKA010-24).